We begin with the raw amino-acid sequence, 261 residues long: Kallikrein 1-related peptidase b5 (261 aa).

Positions 1–18 (MWFLILFLALSLGGIDAA) are cleaved as a signal peptide. Residues 19 to 24 (PPVQSR) constitute a propeptide, activation peptide. The Peptidase S1 domain maps to 25–258 (IFGGFNCEKN…FNSWIKDTIA (234 aa)). Intrachain disulfides connect Cys31–Cys173, Cys50–Cys66, Cys152–Cys219, Cys184–Cys198, and Cys209–Cys234. Catalysis depends on His65, which acts as the Charge relay system. A glycan (N-linked (GlcNAc...) asparagine) is linked at Asn102. Asp120 acts as the Charge relay system in catalysis. Ser213 acts as the Charge relay system in catalysis.

This sequence belongs to the peptidase S1 family. Kallikrein subfamily.

It catalyses the reaction Preferential cleavage of Arg-|-Xaa bonds in small molecule substrates. Highly selective action to release kallidin (lysyl-bradykinin) from kininogen involves hydrolysis of Met-|-Xaa or Leu-|-Xaa.. Glandular kallikreins cleave Met-Lys and Arg-Ser bonds in kininogen to release Lys-bradykinin. The polypeptide is Kallikrein 1-related peptidase b5 (Klk1b5) (Mus musculus (Mouse)).